We begin with the raw amino-acid sequence, 376 residues long: MIKNNKRIKSTVCALSLVALTLGSAVSLACTRFVYLDPHNPDYPITARSMDWADDTETNLWIFPQELKRSGGAGQYSLEWTSKYGSVIASAFDGRKGMASTTDGVNEKGLAANVLWLAESEYPKTKPTAKKPGLSVAAWAQYVLDNFATVDEAVKSLQQEKFILVTKQVEGQKRLATLHLSLSDSSGDSAIIEYIDGKQVIHHSKNYQVMTNSPTFDQQLTLNAYWDQIGGNVMLPGTNRAADRFVRASFYVKNVNPNKLIPGVAEKGKIEKDKADLATAFSIIRNASVPYGYSLPDMPNIASTRWRTVVDHKSLQYFFESAVSPNIFWVDLKKINFAPRGGSAAKLDLGPNQSTIYSGQASGHFKPAQPFEFAGL.

The N-terminal stretch at 1-29 (MIKNNKRIKSTVCALSLVALTLGSAVSLA) is a signal peptide. C30 serves as the catalytic Nucleophile.

Belongs to the peptidase C59 family. In terms of assembly, homotetramer. Dimer of dimers.

Its subcellular location is the periplasm. The catalysed reaction is a penicillin + H2O = 6-aminopenicillanate + a carboxylate. Its activity is regulated as follows. Exhibits uncharacteristic kinetic behavior, showing positive cooperativity coupled with substrate inhibition. Penicillin acylase activity is enhanced in the presence of the reducing agent DTT, indicating active sulfhydryl group in the enzyme. Also shows enhanced activity in presence of organic solvents and detergents. Inhibited largely in presence of Ag(+), Hg(2+) and Cd(2+) ions, which have strong affinities for sulfhydryl groups. Activity is also inhibited by bile salts. Its function is as follows. Catalyzes the hydrolysis of penicillin V to 6-aminopenicillanate (6-APA). Shows high specificity towards penicillin V. Can use other beta-lactam substrates, including penicillin G, ampicillin, cephalexin, cloxacillin and dicloxacillin, but at a rate less than 10% of that of penicillin V. Does not show any activity with glyco- or tauro-conjugated bile salts. The chain is Penicillin V acylase from Pectobacterium atrosepticum (strain SCRI 1043 / ATCC BAA-672) (Erwinia carotovora subsp. atroseptica).